The following is a 147-amino-acid chain: Large ribosomal subunit protein uL13 (147 aa).

Belongs to the universal ribosomal protein uL13 family. Part of the 50S ribosomal subunit.

Its function is as follows. This protein is one of the early assembly proteins of the 50S ribosomal subunit, although it is not seen to bind rRNA by itself. It is important during the early stages of 50S assembly. This is Large ribosomal subunit protein uL13 from Levilactobacillus brevis (strain ATCC 367 / BCRC 12310 / CIP 105137 / JCM 1170 / LMG 11437 / NCIMB 947 / NCTC 947) (Lactobacillus brevis).